A 325-amino-acid polypeptide reads, in one-letter code: Lipoyl synthase (325 aa).

Positions 72, 77, 83, 98, 102, 105, and 312 each coordinate [4Fe-4S] cluster. Positions 84–301 constitute a Radical SAM core domain; sequence FAGGTATFMI…AEEGERMGFK (218 aa).

This sequence belongs to the radical SAM superfamily. Lipoyl synthase family. [4Fe-4S] cluster is required as a cofactor.

Its subcellular location is the cytoplasm. The catalysed reaction is [[Fe-S] cluster scaffold protein carrying a second [4Fe-4S](2+) cluster] + N(6)-octanoyl-L-lysyl-[protein] + 2 oxidized [2Fe-2S]-[ferredoxin] + 2 S-adenosyl-L-methionine + 4 H(+) = [[Fe-S] cluster scaffold protein] + N(6)-[(R)-dihydrolipoyl]-L-lysyl-[protein] + 4 Fe(3+) + 2 hydrogen sulfide + 2 5'-deoxyadenosine + 2 L-methionine + 2 reduced [2Fe-2S]-[ferredoxin]. It functions in the pathway protein modification; protein lipoylation via endogenous pathway; protein N(6)-(lipoyl)lysine from octanoyl-[acyl-carrier-protein]: step 2/2. Its function is as follows. Catalyzes the radical-mediated insertion of two sulfur atoms into the C-6 and C-8 positions of the octanoyl moiety bound to the lipoyl domains of lipoate-dependent enzymes, thereby converting the octanoylated domains into lipoylated derivatives. In Azotobacter vinelandii (strain DJ / ATCC BAA-1303), this protein is Lipoyl synthase.